We begin with the raw amino-acid sequence, 610 residues long: GPI transamidase component GPI16 (610 aa).

A signal peptide spans 1 to 19; that stretch reads MILTLAYFMLGTLLLGVFA. Over 20 to 551 the chain is Lumenal; it reads EDTVSQIGIN…STPDFSMPYN (532 aa). The N-linked (GlcNAc...) asparagine glycan is linked to Asn-184. The chain crosses the membrane as a helical span at residues 552 to 572; that stretch reads VIILTSTIMGLIFGMLYNLMV. Topologically, residues 573–610 are cytoplasmic; that stretch reads KRMVTVEEADKITLQSGLKYKLLKLKEKFLGKKKTKTD.

This sequence belongs to the PIGT family. In terms of assembly, forms a complex with CDC91, GPI17, GPI8 and GAA1. The disulfide bond between GPI8 and GPI16 is important for normal enzyme activity.

The protein localises to the endoplasmic reticulum membrane. It participates in glycolipid biosynthesis; glycosylphosphatidylinositol-anchor biosynthesis. Its function is as follows. Component of the GPI transamidase complex. Involved in transfer of GPI to proteins. The sequence is that of GPI transamidase component GPI16 (GPI16) from Saccharomyces cerevisiae (strain ATCC 204508 / S288c) (Baker's yeast).